The following is a 70-amino-acid chain: DNA-directed RNA polymerase subunit omega (70 aa).

This sequence belongs to the RNA polymerase subunit omega family. In cyanobacteria the RNAP catalytic core is composed of 2 alpha, 1 beta, 1 beta', 1 gamma and 1 omega subunit. When a sigma factor is associated with the core the holoenzyme is formed, which can initiate transcription.

The catalysed reaction is RNA(n) + a ribonucleoside 5'-triphosphate = RNA(n+1) + diphosphate. In terms of biological role, promotes RNA polymerase assembly. Latches the N- and C-terminal regions of the beta' subunit thereby facilitating its interaction with the beta and alpha subunits. The polypeptide is DNA-directed RNA polymerase subunit omega (Prochlorococcus marinus (strain NATL1A)).